The primary structure comprises 967 residues: RNA polymerase-associated protein RapA (967 aa).

The Helicase ATP-binding domain maps to 163–333; that stretch reads EVGQRHAPRV…FARLRLLDPN (171 aa). 176–183 provides a ligand contact to ATP; it reads DEVGLGKT. Residues 279–282 carry the DEAH box motif; the sequence is DEAH. The Helicase C-terminal domain occupies 489–643; it reads RVEWLLNYLT…TCPTGRTIYD (155 aa).

It belongs to the SNF2/RAD54 helicase family. RapA subfamily. Interacts with the RNAP. Has a higher affinity for the core RNAP than for the holoenzyme. Its ATPase activity is stimulated by binding to RNAP.

Transcription regulator that activates transcription by stimulating RNA polymerase (RNAP) recycling in case of stress conditions such as supercoiled DNA or high salt concentrations. Probably acts by releasing the RNAP, when it is trapped or immobilized on tightly supercoiled DNA. Does not activate transcription on linear DNA. Probably not involved in DNA repair. The chain is RNA polymerase-associated protein RapA from Pectobacterium carotovorum subsp. carotovorum (strain PC1).